We begin with the raw amino-acid sequence, 206 residues long: Uridine kinase (206 aa).

Residue 9-16 (GGSGSGKT) coordinates ATP.

The protein belongs to the uridine kinase family.

It is found in the cytoplasm. It catalyses the reaction uridine + ATP = UMP + ADP + H(+). The catalysed reaction is cytidine + ATP = CMP + ADP + H(+). It functions in the pathway pyrimidine metabolism; CTP biosynthesis via salvage pathway; CTP from cytidine: step 1/3. The protein operates within pyrimidine metabolism; UMP biosynthesis via salvage pathway; UMP from uridine: step 1/1. This chain is Uridine kinase, found in Borrelia garinii subsp. bavariensis (strain ATCC BAA-2496 / DSM 23469 / PBi) (Borreliella bavariensis).